A 64-amino-acid polypeptide reads, in one-letter code: Large ribosomal subunit protein bL35 (64 aa).

This sequence belongs to the bacterial ribosomal protein bL35 family.

The sequence is that of Large ribosomal subunit protein bL35 from Carboxydothermus hydrogenoformans (strain ATCC BAA-161 / DSM 6008 / Z-2901).